The chain runs to 256 residues: Homeobox protein goosecoid (256 aa).

A DNA-binding region (homeobox) is located at residues 160-219 (KRRHRTIFTDEQLEALENLFQETKYPDVGTREQLARKVHLREEKVEVWFKNRRAKWRRQK). A disordered region spans residues 213-256 (AKWRRQKRSSSEESENAEKWNKTSSKASPEKREEEGKSDLDSDS). Positions 240–256 (SPEKREEEGKSDLDSDS) are enriched in basic and acidic residues.

Belongs to the paired homeobox family. Bicoid subfamily. In terms of tissue distribution, in early gastrulation, expressed in the dorsal lip. In later stages of development found in head, limbs and body wall. In the embryo, expressed in the postotic cranial neural crest cells, the frontonasal prominence, the first branchial arch and cleft, and specific regions of large joints.

The protein localises to the nucleus. Functionally, regulates chordin (CHRD). May play a role in spatial programing within discrete embryonic fields or lineage compartments during organogenesis. In concert with NKX3-2, plays a role in defining the structural components of the middle ear; required for the development of the entire tympanic ring. Goosecoid-expressing regions of the gastrulating mouse egg cylinder have organizer-like activity when transplanted into Xenopus embryos. Probably involved in the regulatory networks that define neural crest cell fate specification and determine mesoderm cell lineages in mammals. In Mus musculus (Mouse), this protein is Homeobox protein goosecoid (Gsc).